Reading from the N-terminus, the 194-residue chain is Small ribosomal subunit protein eS7 (194 aa).

The protein belongs to the eukaryotic ribosomal protein eS7 family.

This chain is Small ribosomal subunit protein eS7 (RpS7), found in Drosophila melanogaster (Fruit fly).